The sequence spans 529 residues: Ectonucleoside triphosphate diphosphohydrolase 3 (529 aa).

At 1 to 22 (MFTVLTRQPCEQAGLKALYRTP) the chain is on the cytoplasmic side. Residues 23–43 (TIIALVVLLVSIVVLVSITVI) form a helical membrane-spanning segment. The Extracellular portion of the chain corresponds to 44–485 (QIHKQEVLPP…PLIRLPIEPP (442 aa)). Asn-81 carries an N-linked (GlcNAc...) asparagine glycan. Residues Cys-92 and Cys-116 are joined by a disulfide bond. The N-linked (GlcNAc...) asparagine glycan is linked to Asn-149. Residue Glu-182 is the Proton acceptor of the active site. 222–226 (GASTQ) contributes to the ATP binding site. A glycan (N-linked (GlcNAc...) asparagine) is linked at Asn-238. 3 disulfides stabilise this stretch: Cys-261/Cys-308, Cys-289/Cys-334, and Cys-347/Cys-353. N-linked (GlcNAc...) asparagine glycans are attached at residues Asn-381, Asn-392, Asn-402, and Asn-454. Cys-399 and Cys-422 form a disulfide bridge. The chain crosses the membrane as a helical span at residues 486–506 (VFVGTLAFFTAAALLCLAFLA). Residues 507-529 (YLCSATRRKRHSEHAFDHAVDSD) are Cytoplasmic-facing.

It belongs to the GDA1/CD39 NTPase family. Ca(2+) is required as a cofactor. Mg(2+) serves as cofactor. In terms of tissue distribution, expressed in adult brain, pancreas, spleen and prostate. Moderate or low expression is seen in most tissues. Not expressed in liver and peripheral blood leukocytes.

The protein localises to the cell membrane. The enzyme catalyses a ribonucleoside 5'-triphosphate + 2 H2O = a ribonucleoside 5'-phosphate + 2 phosphate + 2 H(+). In terms of biological role, has a threefold preference for the hydrolysis of ATP over ADP. In Homo sapiens (Human), this protein is Ectonucleoside triphosphate diphosphohydrolase 3 (ENTPD3).